The chain runs to 380 residues: Methenyltetrahydrofolate synthase domain-containing protein (380 aa).

Residues 245-258 (EEQAGKDVTLRDGP) show a composition bias toward basic and acidic residues. 2 disordered regions span residues 245-283 (EEQAGKDVTLRDGPRSPPGATRSPRDLAPPELGSVPLSS) and 361-380 (LVGSHTAEPLPDHQPAIAGP). One can recognise an RRM domain in the interval 282 to 355 (SSVQIGNLPR…NTVRVVLARQ (74 aa)).

In Bos taurus (Bovine), this protein is Methenyltetrahydrofolate synthase domain-containing protein (MTHFSD).